Reading from the N-terminus, the 429-residue chain is GTPase Obg (429 aa).

One can recognise an Obg domain in the interval 1 to 158; that stretch reads MFVDQVKIYV…RNVQLELKVL (158 aa). The disordered stretch occupies residues 124 to 145; the sequence is RGNKRFATPANPAPELSENGEP. Residues 159–329 enclose the OBG-type G domain; it reads ADVGLVGFPS…LLLAIADKLE (171 aa). GTP is bound by residues 165-172, 190-194, 212-215, 282-285, and 310-312; these read GFPSVGKS, FTTIV, DLPG, NKMD, and SAV. Residues Ser-172 and Thr-192 each coordinate Mg(2+). One can recognise an OCT domain in the interval 351-429; that stretch reads KYVADEPDFE…LLDYEFEFMD (79 aa).

The protein belongs to the TRAFAC class OBG-HflX-like GTPase superfamily. OBG GTPase family. Monomer. It depends on Mg(2+) as a cofactor.

It localises to the cytoplasm. An essential GTPase which binds GTP, GDP and possibly (p)ppGpp with moderate affinity, with high nucleotide exchange rates and a fairly low GTP hydrolysis rate. Plays a role in control of the cell cycle, stress response, ribosome biogenesis and in those bacteria that undergo differentiation, in morphogenesis control. This Listeria monocytogenes serotype 4a (strain HCC23) protein is GTPase Obg.